The sequence spans 162 residues: Urease accessory protein UreE 1 (162 aa).

Residues 143–162 (SGGHQHHHGHDHDHHHPDHE) are disordered. Over residues 152 to 162 (HDHDHHHPDHE) the composition is skewed to basic and acidic residues.

The protein belongs to the UreE family.

It is found in the cytoplasm. In terms of biological role, involved in urease metallocenter assembly. Binds nickel. Probably functions as a nickel donor during metallocenter assembly. The chain is Urease accessory protein UreE 1 from Brucella suis biovar 1 (strain 1330).